The following is a 435-amino-acid chain: Zinc finger CCCH domain-containing protein 17 (435 aa).

Disordered regions lie at residues 1–30 and 58–107; these read MDIE…SSTS and TAKR…GPRH. The segment at 28–54 adopts a C3H1-type 1 zinc-finger fold; the sequence is STSGKVCIHWRAGRCNRFPCPYLHSEL. Gly residues predominate over residues 77-103; sequence SGGGGGRGAGGAGGPNKWGRGPGGADG. Residues 108-135 form a C3H1-type 2 zinc finger; it reads KVPDRPCRYFLAGDCSYGEKCRYPHSYS. WD repeat units lie at residues 148–189, 191–225, 227–264, 271–308, 311–348, 355–395, and 397–435; these read GHEK…GVIN, GREI…EMNL, GPTG…NGFE, GHQL…CIQT, DHTG…SLEV, EHGA…DRGR, and FSKQ…SQTK.

The chain is Zinc finger CCCH domain-containing protein 17 from Oryza sativa subsp. japonica (Rice).